The primary structure comprises 746 residues: Polyribonucleotide nucleotidyltransferase (746 aa).

Mg(2+) contacts are provided by Asp-490 and Asp-496. In terms of domain architecture, KH spans 557–619 (PRIETMIIGK…ATIDAAVKAI (63 aa)). One can recognise an S1 motif domain in the interval 629 to 699 (GEVYEGKISS…KTGKFKLSRK (71 aa)). The segment at 701–746 (LLPKPEGYEERPPRPERGERGPRQDRGDRGPRQDRGDRGPRREYRD) is disordered. Positions 706-746 (EGYEERPPRPERGERGPRQDRGDRGPRQDRGDRGPRREYRD) are enriched in basic and acidic residues.

The protein belongs to the polyribonucleotide nucleotidyltransferase family. Requires Mg(2+) as cofactor.

The protein localises to the cytoplasm. It catalyses the reaction RNA(n+1) + phosphate = RNA(n) + a ribonucleoside 5'-diphosphate. Functionally, involved in mRNA degradation. Catalyzes the phosphorolysis of single-stranded polyribonucleotides processively in the 3'- to 5'-direction. The sequence is that of Polyribonucleotide nucleotidyltransferase from Parabacteroides distasonis (strain ATCC 8503 / DSM 20701 / CIP 104284 / JCM 5825 / NCTC 11152).